The chain runs to 296 residues: UBX domain-containing protein 1-A (296 aa).

The UBA domain maps to 1 to 42; that stretch reads MAECSTLESLIEMGFSSTRAEKALTATGNQGIEPAMDWLVEH. Positions 43–216 are disordered; the sequence is EDDPDIDEPS…VQEPPTKKEY (174 aa). Residues 61–75 show a composition bias toward low complexity; it reads TDTADTTDTTDTTDT. 3 stretches are compositionally biased toward basic and acidic residues: residues 86–100, 107–123, and 138–178; these read PLTE…KRMM, QNER…EQEK, and KMQE…DRAR. The stretch at 87 to 177 forms a coiled coil; that stretch reads LTEEEKEKQT…KIARDKADRA (91 aa). The segment covering 191–206 has biased composition (low complexity); sequence PAETSIPATTPSPSSP. A UBX domain is found at 214-293; it reads KEYDQCRIQV…GLVPTAVLIV (80 aa).

It is found in the cytoplasm. Functionally, component of a complex required to couple deglycosylation and proteasome-mediated degradation of misfolded proteins in the endoplasmic reticulum that are retrotranslocated in the cytosol. Involved in ubiquitin-proteasome systems. This is UBX domain-containing protein 1-A (ubxn1-a) from Xenopus laevis (African clawed frog).